We begin with the raw amino-acid sequence, 250 residues long: Triosephosphate isomerase (250 aa).

9–11 (NWK) serves as a coordination point for substrate. Histidine 96 acts as the Electrophile in catalysis. Glutamate 168 acts as the Proton acceptor in catalysis. Residues glycine 174, serine 216, and 237–238 (GG) each bind substrate.

The protein belongs to the triosephosphate isomerase family. As to quaternary structure, homodimer.

It is found in the cytoplasm. It catalyses the reaction D-glyceraldehyde 3-phosphate = dihydroxyacetone phosphate. It participates in carbohydrate biosynthesis; gluconeogenesis. It functions in the pathway carbohydrate degradation; glycolysis; D-glyceraldehyde 3-phosphate from glycerone phosphate: step 1/1. Functionally, involved in the gluconeogenesis. Catalyzes stereospecifically the conversion of dihydroxyacetone phosphate (DHAP) to D-glyceraldehyde-3-phosphate (G3P). In Leptospira borgpetersenii serovar Hardjo-bovis (strain JB197), this protein is Triosephosphate isomerase.